The following is a 384-amino-acid chain: Endoglucanase (384 aa).

An N-terminal signal peptide occupies residues 1-25 (MTRRRLLHAGTLAGVAALLPAAALA). The Proton donor role is filled by Glu63. Catalysis depends on Asp124, which acts as the Nucleophile.

This sequence belongs to the glycosyl hydrolase 8 (cellulase D) family.

It localises to the secreted. The enzyme catalyses Endohydrolysis of (1-&gt;4)-beta-D-glucosidic linkages in cellulose, lichenin and cereal beta-D-glucans.. Its pathway is glycan metabolism; bacterial cellulose biosynthesis. Functionally, hydrolyzes carboxymethylcellulose. The sequence is that of Endoglucanase (bcsZ) from Xanthomonas axonopodis pv. citri (strain 306).